The following is a 78-amino-acid chain: Probable Fe(2+)-trafficking protein (78 aa).

It belongs to the Fe(2+)-trafficking protein family. Monomer.

In terms of biological role, could be a mediator in iron transactions between iron acquisition and iron-requiring processes, such as synthesis and/or repair of Fe-S clusters in biosynthetic enzymes. This is Probable Fe(2+)-trafficking protein from Wigglesworthia glossinidia brevipalpis.